We begin with the raw amino-acid sequence, 283 residues long: Thymidylate synthase (283 aa).

Arg-22 contacts dUMP. Cys-160 serves as the catalytic Nucleophile. DUMP is bound by residues 180-183 (RSCD), Asn-191, and 221-223 (HIY). Asp-183 serves as a coordination point for (6R)-5,10-methylene-5,6,7,8-tetrahydrofolate. (6R)-5,10-methylene-5,6,7,8-tetrahydrofolate is bound at residue Ser-282.

Belongs to the thymidylate synthase family. Bacterial-type ThyA subfamily. Homodimer.

The protein resides in the cytoplasm. The catalysed reaction is dUMP + (6R)-5,10-methylene-5,6,7,8-tetrahydrofolate = 7,8-dihydrofolate + dTMP. It participates in pyrimidine metabolism; dTTP biosynthesis. Functionally, catalyzes the reductive methylation of 2'-deoxyuridine-5'-monophosphate (dUMP) to 2'-deoxythymidine-5'-monophosphate (dTMP) while utilizing 5,10-methylenetetrahydrofolate (mTHF) as the methyl donor and reductant in the reaction, yielding dihydrofolate (DHF) as a by-product. This enzymatic reaction provides an intracellular de novo source of dTMP, an essential precursor for DNA biosynthesis. This chain is Thymidylate synthase, found in Haemophilus influenzae (strain PittEE).